The sequence spans 602 residues: Glycoprotein G (602 aa).

Residues 1–49 are Intravirion-facing; that stretch reads MPAENKKVRFENTTSDKGKIPSKVIKSYYGTMDIKKINEGLLDSKILSA. A helical membrane pass occupies residues 50–70; the sequence is FNTVIALLGSIVIIVMNIMII. Residues 71–602 lie on the Virion surface side of the membrane; the sequence is QNYTRSTDNQ…FAVKIPEQCT (532 aa). Asparagine 72 and asparagine 159 each carry an N-linked (GlcNAc...) asparagine; by host glycan. The tract at residues 96–163 is stalk; sequence GLADKIGTEI…KIHECNISCP (68 aa). The segment at 177-602 is head; sequence GVSNLVGLPN…FAVKIPEQCT (426 aa). 7 disulfide bridges follow: cysteine 189–cysteine 601, cysteine 216–cysteine 240, cysteine 282–cysteine 295, cysteine 382–cysteine 395, cysteine 387–cysteine 499, cysteine 493–cysteine 503, and cysteine 565–cysteine 574. N-linked (GlcNAc...) asparagine; by host glycans are attached at residues asparagine 306 and asparagine 378. 2 N-linked (GlcNAc...) asparagine; by host glycosylation sites follow: asparagine 417 and asparagine 481. N-linked (GlcNAc...) asparagine; by host glycosylation occurs at asparagine 529.

Belongs to the paramyxoviruses hemagglutinin-neuraminidase family. Homotetramer; disulfide-linked. Interacts with host EFNB2; this interaction allows the virus entry into the host cell. Interacts with host EFNB3; this interaction allows the virus entry into the host cell. Interacts with the fusion glycoprotein; this interaction involves both head and stalk regions of glygoprotein G. Post-translationally, N-glycosylated.

The protein localises to the virion membrane. It is found in the host cell membrane. Functionally, interacts with host ephrinB2/EFNB2 or ephrin B3/EFNB3 to provide virion attachment to target cell. This attachment induces virion internalization predominantly through clathrin-mediated endocytosis. This chain is Glycoprotein G (G), found in Cynopterus brachyotis (Lesser short-nosed fruit bat).